Reading from the N-terminus, the 196-residue chain is Imidazoleglycerol-phosphate dehydratase (196 aa).

Belongs to the imidazoleglycerol-phosphate dehydratase family.

The protein resides in the cytoplasm. The catalysed reaction is D-erythro-1-(imidazol-4-yl)glycerol 3-phosphate = 3-(imidazol-4-yl)-2-oxopropyl phosphate + H2O. It participates in amino-acid biosynthesis; L-histidine biosynthesis; L-histidine from 5-phospho-alpha-D-ribose 1-diphosphate: step 6/9. The polypeptide is Imidazoleglycerol-phosphate dehydratase (Clostridium botulinum (strain Langeland / NCTC 10281 / Type F)).